The following is a 376-amino-acid chain: UPF0754 membrane protein Sca_1420 (376 aa).

The next 2 membrane-spanning stretches (helical) occupy residues 4-24 (FLVILFMIVIGALIGGITNII) and 356-376 (LLGFLLGGIIGCLQGIIALFV).

Belongs to the UPF0754 family.

It localises to the cell membrane. The sequence is that of UPF0754 membrane protein Sca_1420 from Staphylococcus carnosus (strain TM300).